Reading from the N-terminus, the 305-residue chain is Elongation factor Ts (305 aa).

The interval 79–82 (TDFV) is involved in Mg(2+) ion dislocation from EF-Tu.

This sequence belongs to the EF-Ts family.

It localises to the cytoplasm. In terms of biological role, associates with the EF-Tu.GDP complex and induces the exchange of GDP to GTP. It remains bound to the aminoacyl-tRNA.EF-Tu.GTP complex up to the GTP hydrolysis stage on the ribosome. This is Elongation factor Ts from Brucella suis biovar 1 (strain 1330).